The sequence spans 424 residues: Serine--tRNA ligase 1 (424 aa).

232 to 234 (TAE) provides a ligand contact to L-serine. 263-265 (RSE) contributes to the ATP binding site. Glutamate 286 lines the L-serine pocket. 350 to 353 (EISS) serves as a coordination point for ATP. Serine 386 contacts L-serine.

Belongs to the class-II aminoacyl-tRNA synthetase family. Type-1 seryl-tRNA synthetase subfamily. As to quaternary structure, homodimer. The tRNA molecule binds across the dimer.

It localises to the cytoplasm. It catalyses the reaction tRNA(Ser) + L-serine + ATP = L-seryl-tRNA(Ser) + AMP + diphosphate + H(+). It carries out the reaction tRNA(Sec) + L-serine + ATP = L-seryl-tRNA(Sec) + AMP + diphosphate + H(+). Its pathway is aminoacyl-tRNA biosynthesis; selenocysteinyl-tRNA(Sec) biosynthesis; L-seryl-tRNA(Sec) from L-serine and tRNA(Sec): step 1/1. Functionally, catalyzes the attachment of serine to tRNA(Ser). Is also able to aminoacylate tRNA(Sec) with serine, to form the misacylated tRNA L-seryl-tRNA(Sec), which will be further converted into selenocysteinyl-tRNA(Sec). The protein is Serine--tRNA ligase 1 of Clostridium acetobutylicum (strain ATCC 824 / DSM 792 / JCM 1419 / IAM 19013 / LMG 5710 / NBRC 13948 / NRRL B-527 / VKM B-1787 / 2291 / W).